A 225-amino-acid polypeptide reads, in one-letter code: uncharacterized protein (225 aa).

A compositionally biased stretch (polar residues) spans Met1–Ser19. The segment at Met1–Asn21 is disordered.

This is an uncharacterized protein from Dictyostelium discoideum (Social amoeba).